Here is a 111-residue protein sequence, read N- to C-terminus: Large ribosomal subunit protein uL23 (111 aa).

It belongs to the universal ribosomal protein uL23 family. Part of the 50S ribosomal subunit. Contacts protein L29, and trigger factor when it is bound to the ribosome.

In terms of biological role, one of the early assembly proteins it binds 23S rRNA. One of the proteins that surrounds the polypeptide exit tunnel on the outside of the ribosome. Forms the main docking site for trigger factor binding to the ribosome. This is Large ribosomal subunit protein uL23 from Chlamydia felis (strain Fe/C-56) (Chlamydophila felis).